The primary structure comprises 226 residues: UPF0758 protein SPs0978 (226 aa).

An MPN domain is found at 103-225; that stretch reads SVLTSVQVAE…YYSFREKSTL (123 aa). Residues H174, H176, and D187 each contribute to the Zn(2+) site. A JAMM motif motif is present at residues 174–187; that stretch reads HNHPSGNIEPSSND.

The protein belongs to the UPF0758 family.

The polypeptide is UPF0758 protein SPs0978 (Streptococcus pyogenes serotype M3 (strain SSI-1)).